We begin with the raw amino-acid sequence, 93 residues long: HssA/B-like protein 26 (93 aa).

Belongs to the hssA/B family.

The chain is HssA/B-like protein 26 (hssl26) from Dictyostelium discoideum (Social amoeba).